The sequence spans 212 residues: Probable GTP-binding protein EngB (212 aa).

One can recognise an EngB-type G domain in the interval 27 to 211 (GPPEIAFAGR…QAAIVLAANG (185 aa)). GTP contacts are provided by residues 35–42 (GRSNVGKS), 62–66 (GRTQE), 89–92 (DMPG), 156–159 (TKTD), and 190–192 (TSS). Positions 42 and 64 each coordinate Mg(2+).

The protein belongs to the TRAFAC class TrmE-Era-EngA-EngB-Septin-like GTPase superfamily. EngB GTPase family. Requires Mg(2+) as cofactor.

In terms of biological role, necessary for normal cell division and for the maintenance of normal septation. The chain is Probable GTP-binding protein EngB from Mesorhizobium japonicum (strain LMG 29417 / CECT 9101 / MAFF 303099) (Mesorhizobium loti (strain MAFF 303099)).